Reading from the N-terminus, the 332-residue chain is 3'(2'),5'-bisphosphate nucleotidase (332 aa).

Aspartate 49 serves as the catalytic Proton acceptor. 4 residues coordinate Mg(2+): glutamate 73, aspartate 129, isoleucine 131, and aspartate 132. Threonine 134 (proton acceptor) is an active-site residue. Residues threonine 134, serine 245, lysine 248, arginine 262, and aspartate 274 each contribute to the adenosine 3',5'-bisphosphate site. The AMP site is built by serine 245, lysine 248, arginine 262, and aspartate 274. Aspartate 274 is a binding site for Mg(2+).

The protein belongs to the inositol monophosphatase superfamily. Mg(2+) serves as cofactor.

The enzyme catalyses 3'-phosphoadenylyl sulfate + H2O = adenosine 5'-phosphosulfate + phosphate. The catalysed reaction is adenosine 3',5'-bisphosphate + H2O = AMP + phosphate. It catalyses the reaction adenosine 2',5'-bisphosphate + H2O = AMP + phosphate. It carries out the reaction 1D-myo-inositol 1,4-bisphosphate + H2O = 1D-myo-inositol 4-phosphate + phosphate. The enzyme catalyses 1D-myo-inositol 1,3,4-trisphosphate + H2O = 1D-myo-inositol 3,4-bisphosphate + phosphate. Its function is as follows. Phosphatase that converts adenosine 3'-phosphate 5'-phosphosulfate (PAPS) to adenosine 5'-phosphosulfate (APS) and 3'(2')-phosphoadenosine 5'-phosphate (PAP) to AMP. Is also able to hydrolyze inositol 1,4-bisphosphate and inositol 1,3,4-trisphosphate. The sequence is that of 3'(2'),5'-bisphosphate nucleotidase from Dictyostelium discoideum (Social amoeba).